Reading from the N-terminus, the 1052-residue chain is ATP-dependent DNA helicase MPH1 (1052 aa).

Residues 89–256 (IVRKGLLQNI…EVVNNLNISK (168 aa)) form the Helicase ATP-binding domain. Position 102 to 109 (102 to 109 (IPTGMGKT)) interacts with ATP. Positions 204–207 (DEAH) match the DEAH box motif. One can recognise a Helicase C-terminal domain in the interval 432 to 649 (ELTQFFYENP…HLVQYRKSDR (218 aa)). Disordered stretches follow at residues 495 to 550 (HGPK…NQKQ), 798 to 832 (IGDT…DLPL), 869 to 898 (SKRQ…QPEV), and 1002 to 1052 (HTVS…DSDF). Basic and acidic residues predominate over residues 503 to 532 (SDREKRLEEERRMDEEKKQAALQEKLERTS). Residues 534–549 (RTGSSEEAQLSGMNQK) are compositionally biased toward polar residues. Composition is skewed to low complexity over residues 875–898 (QPEV…QPEV) and 1005–1028 (SQSQ…QQAS). Residues 1029 to 1040 (QKDRSSQDKDLT) show a composition bias toward basic and acidic residues. Positions 1043-1052 (ELEDLLDSDF) are enriched in acidic residues.

It belongs to the DEAD box helicase family. DEAH subfamily. FANCM sub-subfamily. Interacts with the MHF histone-fold complex to form the FANCM-MHF complex.

It is found in the nucleus. The catalysed reaction is ATP + H2O = ADP + phosphate + H(+). In terms of biological role, ATP-dependent DNA helicase involved in DNA damage repair by homologous recombination and in genome maintenance. Capable of unwinding D-loops. Plays a role in limiting crossover recombinants during mitotic DNA double-strand break (DSB) repair. Component of a FANCM-MHF complex which promotes gene conversion at blocked replication forks, probably by reversal of the stalled fork. The chain is ATP-dependent DNA helicase MPH1 from Candida glabrata (strain ATCC 2001 / BCRC 20586 / JCM 3761 / NBRC 0622 / NRRL Y-65 / CBS 138) (Yeast).